The primary structure comprises 170 residues: MTTGALPSTPANEPLIKSADNVANLIESFIELGVLVHDNQGTPQSNQALMNKLNQLISQLSQTSTTANDPNDANTNLKQFLIPIDVISYIEDGRNPDIYTREFIEVNAKSNARLKGKMLGFKKLRDVFGDKLKQEFPQLEKGVDDIINRTNDNSSHTASVITDTANNNNS.

The protein belongs to the Mediator complex subunit 10 family. As to quaternary structure, component of the Mediator complex.

It localises to the nucleus. In terms of biological role, component of the Mediator complex, a coactivator involved in the regulated transcription of nearly all RNA polymerase II-dependent genes. Mediator functions as a bridge to convey information from gene-specific regulatory proteins to the basal RNA polymerase II transcription machinery. Mediator is recruited to promoters by direct interactions with regulatory proteins and serves as a scaffold for the assembly of a functional preinitiation complex with RNA polymerase II and the general transcription factors. The chain is Mediator of RNA polymerase II transcription subunit 10 (NUT2) from Candida albicans (strain SC5314 / ATCC MYA-2876) (Yeast).